We begin with the raw amino-acid sequence, 395 residues long: Phosphopentomutase (395 aa).

Mn(2+)-binding residues include Asp-12, Asp-289, His-294, Asp-330, His-331, and His-342.

It belongs to the phosphopentomutase family. Mn(2+) serves as cofactor.

The protein resides in the cytoplasm. It carries out the reaction 2-deoxy-alpha-D-ribose 1-phosphate = 2-deoxy-D-ribose 5-phosphate. It catalyses the reaction alpha-D-ribose 1-phosphate = D-ribose 5-phosphate. Its pathway is carbohydrate degradation; 2-deoxy-D-ribose 1-phosphate degradation; D-glyceraldehyde 3-phosphate and acetaldehyde from 2-deoxy-alpha-D-ribose 1-phosphate: step 1/2. Its function is as follows. Isomerase that catalyzes the conversion of deoxy-ribose 1-phosphate (dRib-1-P) and ribose 1-phosphate (Rib-1-P) to deoxy-ribose 5-phosphate (dRib-5-P) and ribose 5-phosphate (Rib-5-P), respectively. This Levilactobacillus brevis (strain ATCC 367 / BCRC 12310 / CIP 105137 / JCM 1170 / LMG 11437 / NCIMB 947 / NCTC 947) (Lactobacillus brevis) protein is Phosphopentomutase.